The primary structure comprises 337 residues: Large ribosomal subunit protein uL3 (337 aa).

The interval 1–26 (MTRHHQPRKGSVAFSPRKRVARETPR) is disordered.

Belongs to the universal ribosomal protein uL3 family. In terms of assembly, part of the 50S ribosomal subunit. Forms a cluster with proteins L14 and L24e.

Functionally, one of the primary rRNA binding proteins, it binds directly near the 3'-end of the 23S rRNA, where it nucleates assembly of the 50S subunit. The chain is Large ribosomal subunit protein uL3 from Methanosphaera stadtmanae (strain ATCC 43021 / DSM 3091 / JCM 11832 / MCB-3).